We begin with the raw amino-acid sequence, 121 residues long: Large ribosomal subunit protein eL18 (121 aa).

Belongs to the eukaryotic ribosomal protein eL18 family. As to quaternary structure, part of the 50S ribosomal subunit.

In Thermococcus kodakarensis (strain ATCC BAA-918 / JCM 12380 / KOD1) (Pyrococcus kodakaraensis (strain KOD1)), this protein is Large ribosomal subunit protein eL18.